The following is a 203-amino-acid chain: Probable cytochrome c oxidase subunit 3 (203 aa).

Helical transmembrane passes span 30–50, 69–89, 102–122, 142–162, and 179–199; these read IIWLSSELMFFAGLFAMYFVA, LAVPVTAVLVASSFTCQMGVF, WYFITLLMGAFFVAGQGYEYY, ITTGFHGLHVIGGLIAFVFLL, and IVVSYYWHFVDIVWIGLFATI.

This sequence belongs to the cytochrome c oxidase subunit 3 family.

It localises to the cell membrane. It carries out the reaction 4 Fe(II)-[cytochrome c] + O2 + 8 H(+)(in) = 4 Fe(III)-[cytochrome c] + 2 H2O + 4 H(+)(out). The chain is Probable cytochrome c oxidase subunit 3 (ctaE) from Nocardia farcinica (strain IFM 10152).